A 224-amino-acid polypeptide reads, in one-letter code: CASP-like protein 3A1 (224 aa).

The Cytoplasmic segment spans residues 1 to 59; sequence MMMNGQKLAPAAEVAVQLPESKVAADNISGTMSGPLVGASGGGTTAAMRPFGRKAEVMH. The helical transmembrane segment at 60–80 threads the bilayer; sequence VLLRLLCIITSVAALSFMFTA. The Extracellular segment spans residues 81–106; it reads QQSSTISIYGFMLPVQSKWSFSHSFE. A helical membrane pass occupies residues 107-127; sequence YLVGVSAAVAAHSLLQLLISM. The Cytoplasmic portion of the chain corresponds to 128 to 142; sequence SRLLRKSPVIPSRSH. Residues 143 to 163 form a helical membrane-spanning segment; sequence AWLIFAGDQVFAYAMISAGAA. Over 164–192 the chain is Extracellular; it reads ASGVTNLNRTGIQHTALPNFCKPLQSFCD. N-linked (GlcNAc...) asparagine glycosylation occurs at Asn171. Residues 193 to 213 traverse the membrane as a helical segment; that stretch reads HVAVSIFFTFTSCFLLAASAV. Residues 214–224 lie on the Cytoplasmic side of the membrane; that stretch reads QEVIWLSRSKY.

This sequence belongs to the Casparian strip membrane proteins (CASP) family. In terms of assembly, homodimer and heterodimers.

It localises to the cell membrane. The protein is CASP-like protein 3A1 of Populus trichocarpa (Western balsam poplar).